The chain runs to 1241 residues: MIENWPKKPEGSQWTDDQWKAVVANGRDILVAAAAGSGKTAVLVERIIKKIINEENPVDVDRLLVVTFTNAAAQEMKNRIGEALEKVLIDEPGSQHIRKQLSLLNKASISTIHSFCLQVIRGYYYMLDVDPRFRIANQTENELLKEEVLDDILEEEYGIEDNTIFFELVDRYTSDRSDDDLQRMILALHTESRAHPNPEKWLDKLVEAYDVEGKTIEDLVYASYLLEDVKFQLETAEQHIRKATELAMLPDGPAPRVETLQADLALLGTLSSAARESWTSVYEAMQNVSWQTLKRIKKSDYNEDVVKQVDSLRNKAKDEVKKLQEELFSRKPESFLRDFQDMHPVLEKLVQLVKVFTERFQAMKRDKGMVDFTDLEHFCLQILSEQSEEGEMKPSAVALQYRNKFAEVLVDEYQDTNFVQESIIKFVTKDSESEGNLFMVGDVKQSIYRFRLAEPGLFLGKYKRFTQEGLGGGMKIDLAKNFRSRHEVLAGTNFIFKQIMGEEVGEIDYDADAELKLGASYPEGEDVAAELLCIQQTEEEVIDGEEGAEVEKAQLEARLMAQRIKAMVDSGYEVYDRKTDSMRPVQYRDFVILLRSMPWAPQIMEELKLQGIPVYADLATGYFEATEVNIMMNVFRVIDNPMQDIPLAAVLRSPIVGLNDEELATLRAHGKKGSFYEVMSSFLKGAPLEEEKELHDKLEWFYNLLQGWREFARQQSLSDLIWKVYGETGYYDFVGGLPAGKQRQANLRVLYDRARQYEATSFRGLFRFLRFIERILERGDDMGTARALGEQEDVVRIMTIHKSKGLEFPVVFVAGLGRRFNTQDLMKRFLLHKDFGFGSQFIDPRKRIKYTTLSQLAIKRKMKMELIAEEMRVLYVALTRAKEKLILIGTVKDATKEMEKWLDAREHSEWLLPDHIRAGASCYLDWIAPSLYRHRDSEILLELGQGSVPDEIYGYDTSWKVEVVDGNTLLAPEPVQEEKQELLEALREKKAVPLESERKEEVYDRLMWKYGYEEATSHRAKQSVTEIKRNYQSEEGSDNAFIKKLRAPIRTRPRFMEKKGLTYAERGTAVHAVMQHVDLKKPITEEVIREQIAGMVNKELLTFEQAEEIAIEKVISFFDSDLGKRVLAAKSVEREVPFTMMLAAEEAYQDWQGQSGESILVQGVIDCMIEEEDGITLIDFKTDTIEGKFPGGFEQAKPILEERYKVQLSLYAKALEKSLQHPVKEKCLYFFDGNHVVKIEE.

One can recognise a UvrD-like helicase ATP-binding domain in the interval 12–485; sequence SQWTDDQWKA…IDLAKNFRSR (474 aa). 33-40 lines the ATP pocket; sequence AAAGSGKT. Residues 505–805 form the UvrD-like helicase C-terminal domain; sequence GEIDYDADAE…RIMTIHKSKG (301 aa).

This sequence belongs to the helicase family. AddA subfamily. Heterodimer of AddA and AddB/RexB. It depends on Mg(2+) as a cofactor.

It carries out the reaction Couples ATP hydrolysis with the unwinding of duplex DNA by translocating in the 3'-5' direction.. It catalyses the reaction ATP + H2O = ADP + phosphate + H(+). The heterodimer acts as both an ATP-dependent DNA helicase and an ATP-dependent, dual-direction single-stranded exonuclease. Recognizes the chi site generating a DNA molecule suitable for the initiation of homologous recombination. The AddA nuclease domain is required for chi fragment generation; this subunit has the helicase and 3' -&gt; 5' nuclease activities. In Bacillus cereus (strain Q1), this protein is ATP-dependent helicase/nuclease subunit A.